A 1558-amino-acid chain; its full sequence is ABC transporter NFT1 (1558 aa).

Topologically, residues 1 to 29 (MIKNGTCPFWERDDLSECARREYIEFKFP) are extracellular. N4 is a glycosylation site (N-linked (GlcNAc...) asparagine). Residues 30-50 (LFILLTGMIYAFCKVFRAFYL) form a helical membrane-spanning segment. Over 51-103 (RRKNHTNEAPEFEEQGNGNHEYARFSVLRLKSAWESRSFCNVNNRSTFDKFKK) the chain is Cytoplasmic. The chain crosses the membrane as a helical span at residues 104–124 (FIEGAFIVLQLTIHLYILSNM). Residues 125–130 (PMDNKK) lie on the Extracellular side of the membrane. The chain crosses the membrane as a helical span at residues 131–151 (FFHQGFLVQMFLWILLLVVIT). Over 152–169 (LRLISASQSFRWVLACKR) the chain is Cytoplasmic. A helical membrane pass occupies residues 170-190 (DLWAVSFYSYASLFTLSILPL). The Extracellular segment spans residues 191-201 (RSVFIGKIKDK). The helical transmembrane segment at 202–222 (IMVKYIISETFIDLALLLLLS) threads the bilayer. At 223–302 (TSSIEGTRYS…SSKKGRLLPN (80 aa)) the chain is on the cytoplasmic side. Residues 303-323 (IICYFKAVFISQLFLAFVSSF) traverse the membrane as a helical segment. An ABC transmembrane type-1 1 domain is found at 311–621 (FISQLFLAFV…IASTVSLLIQ (311 aa)). At 324–351 (LNFVPSLLMPRILSYVNDPKSQSWNLVS) the chain is on the extracellular side. Residues 352 to 374 (LYVSSMLVSKIIATTCRGQGLFL) form a helical membrane-spanning segment. Residues 375–449 (GEKGTMQLRT…VMSIDAFKVS (75 aa)) are Cytoplasmic-facing. Positions 410 to 434 (NASTSFEENPDSSEAEPRKKSSRKD) are disordered. Over residues 424–434 (AEPRKKSSRKD) the composition is skewed to basic and acidic residues. Residues 450 to 470 (EAMNTFYLACEAVFMTVTALM) form a helical membrane-spanning segment. At 471-481 (ILYSLLGWSAF) the chain is on the extracellular side. A helical membrane pass occupies residues 482–504 (AGTFALLAMIPLNFWCATFYGNY). The Cytoplasmic segment spans residues 505-558 (QADQLILTDKRTSGISEALNSIRVIKLLAWENLFYQKIINVRDGEIRLLKKKAT). A helical transmembrane segment spans residues 559–579 (IFFLNHLIWFFGPTLVSAITF). At 580 to 584 (SVFIK) the chain is on the extracellular side. A helical transmembrane segment spans residues 585–605 (FQNQTLTPTIAFTALSLFAIL). The Cytoplasmic segment spans residues 606–953 (RTPMDQIAST…KFSAYKWLAD (348 aa)). The ABC transporter 1 domain maps to 651 to 892 (FGFEDASMEW…NEFLRESINN (242 aa)). ATP is bound at residue 686–693 (GPTGSGKS). Over residues 892–901 (NDSKNTTHNQ) the composition is skewed to polar residues. A disordered region spans residues 892–926 (NDSKNTTHNQIDLKRSTTSKKTKNGDPEGENSQDE). A helical transmembrane segment spans residues 954 to 974 (YFGGLGVVFVFTSSAILIHGI). An ABC transmembrane type-1 2 domain is found at 961–1251 (VFVFTSSAIL…IIKVFSSVEL (291 aa)). The Extracellular portion of the chain corresponds to 975–1013 (TLSQGFWLRYWLETGSSGSKSTWLYRIVEGHSNIYFILT). Residues 1014–1034 (YIVIGFVSSFLTSGKVWIAII) form a helical membrane-spanning segment. Residues 1035 to 1082 (SGTNVTKKIFAKLLSSILYAKLRFHNVTPTGRIMNRFSKDMDIIDQQL) are Cytoplasmic-facing. The helical transmembrane segment at 1083–1105 (IPNFEGLSYSVVVCLWIILLIGY) threads the bilayer. The Extracellular portion of the chain corresponds to 1106–1109 (VTPQ). The helical transmembrane segment at 1110–1132 (FLLFAIPLCALYYTVCTLYLRAS) threads the bilayer. The Cytoplasmic segment spans residues 1133–1199 (RELKRIDNIN…ATEWITYRVD (67 aa)). Residues 1200 to 1220 (IIGTLVLFSSSVMIIMKASYL) form a helical membrane-spanning segment. The Extracellular portion of the chain corresponds to 1221-1222 (DA). A helical membrane pass occupies residues 1223–1243 (GLAGILLSNAFSFTETAQWII). Residues 1244 to 1558 (KVFSSVELLM…LAKVSFDNKR (315 aa)) are Cytoplasmic-facing. In terms of domain architecture, ABC transporter 2 spans 1285 to 1538 (VELKNLSLRY…RNTIFYRLCR (254 aa)). 1319–1326 (GRTGAGKS) is a binding site for ATP.

The protein belongs to the ABC transporter superfamily. ABCC family. Conjugate transporter (TC 3.A.1.208) subfamily.

It localises to the membrane. This chain is ABC transporter NFT1 (NFT1), found in Saccharomyces cerevisiae (strain YJM789) (Baker's yeast).